Consider the following 884-residue polypeptide: Alanine--tRNA ligase (884 aa).

Zn(2+) is bound by residues His570, His574, Cys676, and His680.

The protein belongs to the class-II aminoacyl-tRNA synthetase family. It depends on Zn(2+) as a cofactor.

The protein localises to the cytoplasm. It catalyses the reaction tRNA(Ala) + L-alanine + ATP = L-alanyl-tRNA(Ala) + AMP + diphosphate. Catalyzes the attachment of alanine to tRNA(Ala) in a two-step reaction: alanine is first activated by ATP to form Ala-AMP and then transferred to the acceptor end of tRNA(Ala). Also edits incorrectly charged Ser-tRNA(Ala) and Gly-tRNA(Ala) via its editing domain. This Lawsonia intracellularis (strain PHE/MN1-00) protein is Alanine--tRNA ligase.